Reading from the N-terminus, the 564-residue chain is MEQLLDNRYRVIKTLGSGGFGETFLAEDSQMPSNRRCVVKQLRPIHNNPQIYQLVQERFQREAAILEDLGSYSGQIPTLYAYFQSNTQFYVVQEWVEGDTLTAKLKQQGVLSESAVRDILINLLPVLEYVHSKRIIHRDIKPDNIILRHRDGKPVLIDFGAVRESMGTVINSQGNPTSSIVIGTPGYMPSEQAAGRPVYSSDLYSLGLTAIYLLTGKQPQELETEPHSGEIIWHRYALNISPTLAAVIDRAIAYHPRERFTTAREMLEALQLGVVSYPPTVPYQQPQSSPTVPYQQPPVVTTPPFATQTNTVAVSPGTAPTPQPINHNNSNKGILMGSLIAGGLIGASVVIGFALTRPNQPVTQTTSLPSETTISNNDTPTVEPSPTDTPETPISQTVTQDPTPQASVRFPINSRPFTTPIDSKPRNTTEPTTSVPQPTTPSEPQITTPVEATDRPSPEQAVQNYYETINQGEYSTAWNLLASSFQNNRKLHPRGYDSYLDWWGGQVENVDVEQVSLLKANADTATVNARLRYFMKSGRQSSSSVRFSLVWDADNNRWVVSGAR.

The Protein kinase domain maps to Y9–Q271. Residues L15–T23 and K40 contribute to the ATP site. D139 (proton acceptor) is an active-site residue. The segment covering Q360 to A406 has biased composition (polar residues). The segment at Q360–P458 is disordered. Residues T428–Q445 show a composition bias toward low complexity.

This sequence belongs to the protein kinase superfamily. Ser/Thr protein kinase family.

The enzyme catalyses L-seryl-[protein] + ATP = O-phospho-L-seryl-[protein] + ADP + H(+). It carries out the reaction L-threonyl-[protein] + ATP = O-phospho-L-threonyl-[protein] + ADP + H(+). Functionally, probably required for both normal cellular growth and differentiation. Inactivation of pknA leads to colonies that appear light green and rough in the absence of combined nitrogen. The protein is Serine/threonine-protein kinase PknA (pknA) of Nostoc sp. (strain PCC 7120 / SAG 25.82 / UTEX 2576).